A 364-amino-acid chain; its full sequence is Homeobox protein Nkx-6.1 (364 aa).

The interval 35–134 (LYPATYPPLP…SSSSSASATS (100 aa)) is disordered. 2 stretches are compositionally biased toward low complexity: residues 48–92 (PSSS…LSAA) and 109–134 (ASGAALPSASPSGSSSSSSSSASATS). The tract at residues 101–268 (LSRPSMPVAS…KYLAGPERAR (168 aa)) is repressor domain. Arginine 189 is subject to Asymmetric dimethylarginine. Residues 236–295 (RKHTRPTFSGQQIFALEKTFEQTKYLAGPERARLAYSLGMTESQVKVWFQNRRTKWRKKH) constitute a DNA-binding region (homeobox). Positions 294–364 (KHAAEMATAK…LHASEAEGSS (71 aa)) are disordered. Residues 304–317 (KKQDSETERLKGTS) show a composition bias toward basic and acidic residues. The tract at residues 306-364 (QDSETERLKGTSENEEEDDDYNKPLDPNSDDEKITQLLKKHKSSSGGLLLHASEAEGSS) is involved in DNA-binding.

Pancreatic beta cells.

The protein localises to the nucleus. Functionally, together with NKX2-2 and IRX3 acts to restrict the generation of motor neurons to the appropriate region of the neural tube. Belongs to the class II proteins of neuronal progenitor factors, which are induced by SHH signals. Transcription factor which binds to specific A/T-rich DNA sequences in the promoter regions of a number of genes. Involved in transcriptional regulation in islet beta cells. Binds to the insulin promoter and is involved in regulation of the insulin gene. The polypeptide is Homeobox protein Nkx-6.1 (NKX6-1) (Mesocricetus auratus (Golden hamster)).